The sequence spans 185 residues: Ribosome-recycling factor (185 aa).

Belongs to the RRF family.

It is found in the cytoplasm. Responsible for the release of ribosomes from messenger RNA at the termination of protein biosynthesis. May increase the efficiency of translation by recycling ribosomes from one round of translation to another. The polypeptide is Ribosome-recycling factor (Rhodospirillum centenum (strain ATCC 51521 / SW)).